Here is a 408-residue protein sequence, read N- to C-terminus: tRNA pseudouridine synthase D (408 aa).

Asp82 functions as the Nucleophile in the catalytic mechanism. In terms of domain architecture, TRUD spans 157–367 (GVPNRFGEQR…MEGERRPLRV (211 aa)).

Belongs to the pseudouridine synthase TruD family.

It catalyses the reaction uridine(13) in tRNA = pseudouridine(13) in tRNA. Functionally, responsible for synthesis of pseudouridine from uracil-13 in transfer RNAs. The polypeptide is tRNA pseudouridine synthase D (Geobacter sulfurreducens (strain ATCC 51573 / DSM 12127 / PCA)).